Consider the following 138-residue polypeptide: MRALWIVAVLLVGVEGSLFELGKMIWQETGKNPVKNYGLYGCNCGVGGRGEPLDATDRCCFVHKCCYKKLTDCDSKKDRYSYKWKNKAIVCGKNQPCMQEMCECDKAFAICLRENLDTYNKSFRYHLKPSCKKTSEQC.

Residues 1–16 (MRALWIVAVLLVGVEG) form the signal peptide. 7 cysteine pairs are disulfide-bonded: Cys-42–Cys-131, Cys-44–Cys-60, Cys-59–Cys-111, Cys-65–Cys-138, Cys-66–Cys-104, Cys-73–Cys-97, and Cys-91–Cys-102. The tract at residues 121–133 (KSFRYHLKPSCKK) is important for membrane-damaging activities in eukaryotes and bacteria; heparin-binding.

In terms of assembly, monomer. In terms of tissue distribution, expressed by the venom gland.

Its subcellular location is the secreted. Functionally, snake venom phospholipase A2 homolog that lacks enzymatic activity. Is myotoxic. Has a strong indirect hemolytic activity and anticoagulant activity. A model of myotoxic mechanism has been proposed: an apo Lys49-PLA2 is activated by the entrance of a hydrophobic molecule (e.g. fatty acid) at the hydrophobic channel of the protein leading to a reorientation of a monomer. This reorientation causes a transition between 'inactive' to 'active' states, causing alignment of C-terminal and membrane-docking sites (MDoS) side-by-side and putting the membrane-disruption sites (MDiS) in the same plane, exposed to solvent and in a symmetric position for both monomers. The MDoS region stabilizes the toxin on membrane by the interaction of charged residues with phospholipid head groups. Subsequently, the MDiS region destabilizes the membrane with penetration of hydrophobic residues. This insertion causes a disorganization of the membrane, allowing an uncontrolled influx of ions (i.e. calcium and sodium), and eventually triggering irreversible intracellular alterations and cell death. The protein is Basic phospholipase A2 homolog acutohaemolysin of Deinagkistrodon acutus (Hundred-pace snake).